The following is a 557-amino-acid chain: Probable tRNA-splicing endonuclease subunit tsp-5 (557 aa).

Disordered regions lie at residues 1–36 (MPLDDDLEDNPSLVPPPSTTTTSSNATGDAATMMDE), 131–152 (KLTKRGKEGAGEDDEEEKDRKL), 225–252 (SVPAAAAATTSAKGEGEQRTEEDEEDDD), 370–403 (PSSTSSSASPTADNQPQKPQSPESDESDSGSDSP), and 514–557 (SGGP…GRGN). A compositionally biased stretch (basic and acidic residues) spans 131 to 140 (KLTKRGKEGA). Residues 370 to 381 (PSSTSSSASPTA) show a composition bias toward low complexity. Composition is skewed to gly residues over residues 517–527 (PRRGGGGGGKK) and 538–549 (GRGGGRGGGRGG).

It belongs to the SEN54 family. TRNA splicing endonuclease is a heterotetramer composed of tsp-2/sen2, tsp-1/sen15, tsp-4/sen34 and tsp-5/sen54. Interacts directly with tsp-2/sen2.

In terms of biological role, non-catalytic subunit of the tRNA-splicing endonuclease complex, a complex responsible for identification and cleavage of the splice sites in pre-tRNA. It cleaves pre-tRNA at the 5' and 3' splice sites to release the intron. The products are an intron and two tRNA half-molecules bearing 2',3' cyclic phosphate and 5'-OH termini. There are no conserved sequences at the splice sites, but the intron is invariably located at the same site in the gene, placing the splice sites an invariant distance from the constant structural features of the tRNA body. May be required to embody the molecular ruler of the complex. In Neurospora crassa (strain ATCC 24698 / 74-OR23-1A / CBS 708.71 / DSM 1257 / FGSC 987), this protein is Probable tRNA-splicing endonuclease subunit tsp-5 (tsp-5).